Consider the following 439-residue polypeptide: Methylenetetrahydrofolate--tRNA-(uracil-5-)-methyltransferase TrmFO (439 aa).

8–13 (GGGLAG) is a binding site for FAD.

It belongs to the MnmG family. TrmFO subfamily. FAD is required as a cofactor.

It is found in the cytoplasm. The enzyme catalyses uridine(54) in tRNA + (6R)-5,10-methylene-5,6,7,8-tetrahydrofolate + NADH + H(+) = 5-methyluridine(54) in tRNA + (6S)-5,6,7,8-tetrahydrofolate + NAD(+). The catalysed reaction is uridine(54) in tRNA + (6R)-5,10-methylene-5,6,7,8-tetrahydrofolate + NADPH + H(+) = 5-methyluridine(54) in tRNA + (6S)-5,6,7,8-tetrahydrofolate + NADP(+). Its function is as follows. Catalyzes the folate-dependent formation of 5-methyl-uridine at position 54 (M-5-U54) in all tRNAs. This is Methylenetetrahydrofolate--tRNA-(uracil-5-)-methyltransferase TrmFO from Dictyoglomus thermophilum (strain ATCC 35947 / DSM 3960 / H-6-12).